The following is a 192-amino-acid chain: Potassium-transporting ATPase KdpC subunit (192 aa).

The helical transmembrane segment at 7–27 threads the bilayer; that stretch reads PLIVIFAVLTAVTGLAYPAVM.

This sequence belongs to the KdpC family. The system is composed of three essential subunits: KdpA, KdpB and KdpC.

It localises to the cell inner membrane. Part of the high-affinity ATP-driven potassium transport (or Kdp) system, which catalyzes the hydrolysis of ATP coupled with the electrogenic transport of potassium into the cytoplasm. This subunit acts as a catalytic chaperone that increases the ATP-binding affinity of the ATP-hydrolyzing subunit KdpB by the formation of a transient KdpB/KdpC/ATP ternary complex. The chain is Potassium-transporting ATPase KdpC subunit from Paraburkholderia phytofirmans (strain DSM 17436 / LMG 22146 / PsJN) (Burkholderia phytofirmans).